We begin with the raw amino-acid sequence, 65 residues long: Weak toxin CM-13b (65 aa).

Cystine bridges form between Cys3-Cys24, Cys6-Cys11, Cys17-Cys42, Cys46-Cys57, and Cys58-Cys63.

It belongs to the three-finger toxin family. Ancestral subfamily. Orphan group II sub-subfamily. As to expression, expressed by the venom gland.

The protein resides in the secreted. Functionally, binds with low affinity to muscular (alpha-1-beta-1-delta-epsilon/CHRNA1-CHRNB1-CHRND-CHRNE) and very low affinity to neuronal (alpha-7/CHRNA7) nicotinic acetylcholine receptor (nAChR). This chain is Weak toxin CM-13b, found in Naja annulifera (Banded Egyptian cobra).